Consider the following 422-residue polypeptide: UDP-N-acetylglucosamine 1-carboxyvinyltransferase 2 (422 aa).

Phosphoenolpyruvate is bound at residue 22–23 (KN). Position 93 (R93) interacts with UDP-N-acetyl-alpha-D-glucosamine. The active-site Proton donor is C117. Position 117 is a 2-(S-cysteinyl)pyruvic acid O-phosphothioketal (C117). UDP-N-acetyl-alpha-D-glucosamine-binding positions include 122 to 126 (RPVDL), D308, and I330.

This sequence belongs to the EPSP synthase family. MurA subfamily.

It localises to the cytoplasm. It catalyses the reaction phosphoenolpyruvate + UDP-N-acetyl-alpha-D-glucosamine = UDP-N-acetyl-3-O-(1-carboxyvinyl)-alpha-D-glucosamine + phosphate. It participates in cell wall biogenesis; peptidoglycan biosynthesis. Functionally, cell wall formation. Adds enolpyruvyl to UDP-N-acetylglucosamine. The sequence is that of UDP-N-acetylglucosamine 1-carboxyvinyltransferase 2 from Legionella pneumophila (strain Lens).